The following is a 762-amino-acid chain: Dolichyl-phosphate-mannose--protein mannosyltransferase 4 (762 aa).

Residues 1-10 show a composition bias toward basic residues; the sequence is MSVPKKRNHG. Residues 1–24 form a disordered region; sequence MSVPKKRNHGKLPPSTKDVDDPSL. The Lumenal portion of the chain corresponds to 1–53; it reads MSVPKKRNHGKLPPSTKDVDDPSLKYTKAAPKCEQVAEHWLLQPLPEPESRYS. Residues 54–74 traverse the membrane as a helical segment; sequence FWVTIVTLLAFAARFYKIWYP. Topologically, residues 75–136 are cytoplasmic; that stretch reads KEVVFDEVHF…IGYSYETHPA (62 aa). Residues 137 to 157 form a helical membrane-spanning segment; that stretch reads PYIAYRSFNAILGTLTVPIMF. Over 158-166 the chain is Lumenal; that stretch reads NTLKELNFR. A helical transmembrane segment spans residues 167 to 187; the sequence is AITCAFASLLVAIDTAHVTET. Over 188-189 the chain is Cytoplasmic; sequence RL. The chain crosses the membrane as a helical span at residues 190 to 210; that stretch reads ILLDAILIISIAATMYCYVRF. At 211-217 the chain is on the lumenal side; sequence YKCQLRQ. The chain crosses the membrane as a helical span at residues 218–238; the sequence is PFTWSWYIWLHATGLSLSFVI. The Cytoplasmic portion of the chain corresponds to 239–242; sequence STKY. The chain crosses the membrane as a helical span at residues 243 to 263; the sequence is VGVMTYSAIGFAAVVNLWQLL. At 264 to 283 the chain is on the lumenal side; that stretch reads DIKAGLSLRQFMRHFSKRLN. Residues 284-304 form a helical membrane-spanning segment; it reads GLVLIPFVIYLFWFWVHFTVL. The Cytoplasmic portion of the chain corresponds to 305-593; that stretch reads NTSGPGDAFM…NGDEKKQIYF (289 aa). MIR domains are found at residues 331–391, 399–458, and 464–521; these read SKTV…VLPP, GQAV…FQPL, and GHVL…VDEI. Residues 594 to 614 traverse the membrane as a helical segment; that stretch reads IGNIIGWWFQVISLAVFVGII. At 615 to 635 the chain is on the lumenal side; it reads VADLITRHRGYYALNKMTREK. Residues 636 to 656 traverse the membrane as a helical segment; the sequence is LYGPLMFFFVSWCCHYFPFFL. The Cytoplasmic segment spans residues 657 to 716; it reads MARQKFLHHYLPAHLIACLFSGALWEVIFSDCKSLDLEKDEDISGASYERNPKVYVKPYT. A helical membrane pass occupies residues 717–737; that stretch reads VFLVCVSCAVAWFFVYFSPLV. Residues 738–762 are Lumenal-facing; that stretch reads YGDVSLSPSEVVSREWFDIELNFSK. N-linked (GlcNAc...) asparagine glycosylation is present at Asn-759.

The protein belongs to the glycosyltransferase 39 family. In terms of assembly, forms a functional homodimer and may form a heterodimer with PMT6. Interacts with RCR1.

It localises to the endoplasmic reticulum membrane. It carries out the reaction a di-trans,poly-cis-dolichyl beta-D-mannosyl phosphate + L-seryl-[protein] = 3-O-(alpha-D-mannosyl)-L-seryl-[protein] + a di-trans,poly-cis-dolichyl phosphate + H(+). The catalysed reaction is a di-trans,poly-cis-dolichyl beta-D-mannosyl phosphate + L-threonyl-[protein] = 3-O-(alpha-D-mannosyl)-L-threonyl-[protein] + a di-trans,poly-cis-dolichyl phosphate + H(+). The protein operates within protein modification; protein glycosylation. Protein O-mannosyltransferase involved in O-glycosylation which is essential for cell wall rigidity. Forms a homodimeric complex to transfer mannose from Dol-P-mannose to Ser or Thr residues on proteins. Specifically acts on secretory proteins with an ER-luminally oriented Ser/Thr-rich region flanked by a membrane anchor such as FUS1, AXL2, GAS1, KEX2, MID2, WSC1, WSC2, OPY2, PRM5, RAX2, or YNL176. The protein is Dolichyl-phosphate-mannose--protein mannosyltransferase 4 of Saccharomyces cerevisiae (strain ATCC 204508 / S288c) (Baker's yeast).